Reading from the N-terminus, the 67-residue chain is Ayadualin (67 aa).

The first 20 residues, 1-20, serve as a signal peptide directing secretion; sequence MNKIILFSAVFLALVFCAEA. The segment covering 35-54 has biased composition (acidic residues); it reads PDDTVDIDEGLPDAFDEDYE. Positions 35–67 are disordered; the sequence is PDDTVDIDEGLPDAFDEDYEQDGHNPYPCRGDC. An Integrin-binding motif motif is present at residues 64-66; the sequence is RGD.

In terms of tissue distribution, salivary gland.

The protein resides in the secreted. Inhibits collagen- and ADP-induced host platelet aggregation by blocking the binding of host integrin alpha-IIb/beta-3 (ITGA2B/ITGB3) to fibrinogen. Inhibits the intrinsic blood coagulation pathway in the host by blocking the activity of host coagulation factor XIIa (F12). The sequence is that of Ayadualin from Lutzomyia ayacuchensis (Sand fly).